We begin with the raw amino-acid sequence, 208 residues long: Thymidylate kinase (208 aa).

11–18 serves as a coordination point for ATP; the sequence is GGEGAGKS.

Belongs to the thymidylate kinase family.

The catalysed reaction is dTMP + ATP = dTDP + ADP. Phosphorylation of dTMP to form dTDP in both de novo and salvage pathways of dTTP synthesis. In Caulobacter vibrioides (strain ATCC 19089 / CIP 103742 / CB 15) (Caulobacter crescentus), this protein is Thymidylate kinase (tmk).